A 120-amino-acid polypeptide reads, in one-letter code: Piercer of microtubule wall 2 protein (120 aa).

Over residues 1 to 10 (MTECDWEKKS) the composition is skewed to basic and acidic residues. The segment at 1–25 (MTECDWEKKSTSASNSDTEMKPELP) is disordered.

This sequence belongs to the PIERCE2 family. Microtubule inner protein component of sperm flagellar doublet microtubules. Interacts with CFAP53, ODAD1 and ODAD3; the interactions link the outer dynein arms docking complex (ODA-DC) to the internal microtubule inner proteins (MIP) in cilium axoneme. As to expression, expressed in trachea multiciliated cells.

It is found in the cytoplasm. It localises to the cytoskeleton. The protein resides in the cilium axoneme. The protein localises to the flagellum axoneme. Its function is as follows. Microtubule inner protein involved in the attachment of outer dynein arms (ODAs) to dynein-decorated doublet microtubules (DMTs) in cilia axoneme, which is required for motile cilia beating. The sequence is that of Piercer of microtubule wall 2 protein (PIERCE2) from Bos taurus (Bovine).